The following is a 600-amino-acid chain: Chaperone protein DnaK (600 aa).

Threonine 175 bears the Phosphothreonine; by autocatalysis mark. Positions phenylalanine 572 to lysine 600 are disordered. Over residues alanine 591–lysine 600 the composition is skewed to polar residues.

Belongs to the heat shock protein 70 family.

Its function is as follows. Acts as a chaperone. The chain is Chaperone protein DnaK from Ureaplasma urealyticum serovar 10 (strain ATCC 33699 / Western).